Here is a 223-residue protein sequence, read N- to C-terminus: Transmembrane protein 114 (223 aa).

Residues 7 to 27 (GLAGAAALTGALSFVLLAAAI) traverse the membrane as a helical segment. N55 and N89 each carry an N-linked (GlcNAc...) asparagine glycan. 3 helical membrane passes run 106 to 126 (FVILLPLSLILMVFGGMTGFL), 134 to 154 (LLLLLTGILFLFGAMVTLAGI), and 189 to 209 (LALGWISFIAELLTGAAFLAA).

The protein belongs to the PMP-22/EMP/MP20 family.

It is found in the cell junction. It localises to the tight junction. The protein localises to the lateral cell membrane. The protein resides in the apical cell membrane. This is Transmembrane protein 114 from Homo sapiens (Human).